Here is an 86-residue protein sequence, read N- to C-terminus: Putative antitoxin VapB36 (86 aa).

In terms of biological role, possibly the antitoxin component of a type II toxin-antitoxin (TA) system. Its cognate toxin is VapC36 (Potential). This chain is Putative antitoxin VapB36 (vapB36), found in Mycobacterium tuberculosis (strain CDC 1551 / Oshkosh).